Reading from the N-terminus, the 377-residue chain is Enoyl reductase cheB (377 aa).

Positions 18–361 (GGSLVIARDV…REISAEKLVV (344 aa)) are enoyl reductase (ER) domain. NADP(+) is bound at residue 49–52 (CDFK). 137-144 (PCCIATMG) contacts substrate. Residues 173–176 (SSSV), 200–203 (SPKN), Tyr218, 265–266 (LE), and Thr283 each bind NADP(+). 285–289 (GAIII) contacts substrate. An NADP(+)-binding site is contributed by 354–355 (IS).

This sequence belongs to the zinc-containing alcohol dehydrogenase family. It depends on heme as a cofactor.

The protein operates within secondary metabolite biosynthesis. In terms of biological role, enoyl reductase; part of the gene cluster that mediates the biosynthesis of chaetoglobosin A which has a unique inhibitory activity against actin polymerization in mammalian cells. Chaetoglobosin A and its intermediates are involved in the morphological differentiation of C.globosum. The first step of the pathway is the synthesis of prochaetoglobosin I via condensation of one acetyl-CoA, 8 malonyl-CoA, and a L-tryptophan molecule by the PKS-NRPS hybrid synthetase cheA, followed by reduction of backbone double bond to install desired geometry by the enoyl reductase cheB. Further multiple oxidation steps performed by the cytochrome P450 monooxygenases cheE and cheG, as well as by the FAD-linked oxidoreductase cheF, lead to the formation of chaetoglobosin A. Depending on the order of action of these reductases, distinct intermediates can be identified. Within the pathway, the cytochrome P450 monooxygenase cheE catalyzes a stereospecific epoxidation on prochaetoglobosin I, cytoglobosin D, and chaetoglobosin J intermediates. The FAD-linked oxidoreductase cheF performs dehydrogenation of the C-20 hydroxyl groups in the 20-dihyrochaetoglobosin A and cytoglobosin D intermediates. Finally, the cytochrome P450 monooxygenase cheG can catalyze the stereospecific dihydroxylation of prochaetoglobosin I and prochaetoglobosin IV at C-19 and C-20, respectively. The Diels-Alderase cheD may play a role in the post-PKS-NRPS biosynthetic steps catalyzing Diels-Alder cyclization. This chain is Enoyl reductase cheB, found in Chaetomium globosum (strain ATCC 6205 / CBS 148.51 / DSM 1962 / NBRC 6347 / NRRL 1970) (Soil fungus).